Reading from the N-terminus, the 220-residue chain is 14-3-3-like protein (220 aa).

Belongs to the 14-3-3 family.

The chain is 14-3-3-like protein from Spinacia oleracea (Spinach).